The sequence spans 414 residues: Arrestin domain-containing protein 3 (414 aa).

Short sequence motifs (PPxY motif) lie at residues 346-349 (PPSY) and 391-394 (PPLY). Residues 393 to 414 (LYSEIDPNPDQSSEDRPSCPSR) form a disordered region. A compositionally biased stretch (basic and acidic residues) spans 405–414 (SEDRPSCPSR).

This sequence belongs to the arrestin family. Interacts (via PPxY motifs) with NEDD4 (via WW domains). Interacts with ADRB2. Interacts with ADRB3. Interacts with HGS (via PPxY motifs). Does not bind TXN (thioredoxin). Interacts with ITCH. Detected in visceral fat, subcutaneous fat, brown fat and skeletal muscle, and at lower levels in kidney.

It is found in the cytoplasm. Its subcellular location is the cell membrane. The protein resides in the lysosome. The protein localises to the endosome. It localises to the early endosome. Its function is as follows. Adapter protein that plays a role in regulating cell-surface expression of adrenergic receptors and probably also other G protein-coupled receptors. Plays a role in NEDD4-mediated ubiquitination and endocytosis af activated ADRB2 and subsequent ADRB2 degradation. May recruit NEDD4 to ADRB2. Alternatively, may function as adapter protein that does not play a major role in recruiting NEDD4 to ADRB2, but rather plays a role in a targeting ADRB2 to endosomes. In Mus musculus (Mouse), this protein is Arrestin domain-containing protein 3 (Arrdc3).